Reading from the N-terminus, the 345-residue chain is Transcription factor 19 (345 aa).

Residues 31–88 (YRLGHRADLCDVALRPQQEPGLISGIHAELHAEPRGDDWRVSLEDHSLQGTLVNNVRL) enclose the FHA domain. 2 disordered regions span residues 138–167 (RSRG…STLS) and 190–277 (LTFS…KYPV). The segment at 293–342 (AAPCCCLPQEETVAWVQCDGCDVWFHVACVGCSIQAAREADFRCPGCRAG) adopts a PHD-type zinc-finger fold. Residues C296, C298, C310, C313, H318, C321, C336, and C339 each contribute to the Zn(2+) site.

The protein resides in the nucleus. Its function is as follows. Potential transcription factor that may play a role in the regulation of genes involved in cell cycle G1/S transition. May bind to regulatory elements of genes, including the promoter of the transcription factor FOXO1. The protein is Transcription factor 19 (TCF19) of Macaca mulatta (Rhesus macaque).